A 432-amino-acid polypeptide reads, in one-letter code: tRNA(Ile)-lysidine synthase (432 aa).

20 to 25 (SGGLDS) lines the ATP pocket.

Belongs to the tRNA(Ile)-lysidine synthase family.

It is found in the cytoplasm. The catalysed reaction is cytidine(34) in tRNA(Ile2) + L-lysine + ATP = lysidine(34) in tRNA(Ile2) + AMP + diphosphate + H(+). Its function is as follows. Ligates lysine onto the cytidine present at position 34 of the AUA codon-specific tRNA(Ile) that contains the anticodon CAU, in an ATP-dependent manner. Cytidine is converted to lysidine, thus changing the amino acid specificity of the tRNA from methionine to isoleucine. This chain is tRNA(Ile)-lysidine synthase, found in Shigella flexneri.